The primary structure comprises 166 residues: uncharacterized protein (166 aa).

In terms of domain architecture, GIY-YIG spans 2-82; the sequence is DNWVCYLIMS…KRLSKKRNIQ (81 aa). A disordered region spans residues 23–43; that stretch reads NNRQRRLNDHNNLNPSRKGAK.

This is an uncharacterized protein from Acanthamoeba polyphaga mimivirus (APMV).